We begin with the raw amino-acid sequence, 382 residues long: Homoserine O-acetyltransferase (382 aa).

Residues 1-20 (MSTDQSPCPSATGAELLPPP) are disordered. An AB hydrolase-1 domain is found at 59-363 (NVVLVEHALT…RDGHDGFLTE (305 aa)). The Nucleophile role is filled by Ser164. Residue Arg234 participates in substrate binding. Active-site residues include Asp327 and His357. Asp358 is a substrate binding site.

It belongs to the AB hydrolase superfamily. MetX family. As to quaternary structure, homodimer.

The protein localises to the cytoplasm. It catalyses the reaction L-homoserine + acetyl-CoA = O-acetyl-L-homoserine + CoA. It participates in amino-acid biosynthesis; L-methionine biosynthesis via de novo pathway; O-acetyl-L-homoserine from L-homoserine: step 1/1. In terms of biological role, transfers an acetyl group from acetyl-CoA to L-homoserine, forming acetyl-L-homoserine. The sequence is that of Homoserine O-acetyltransferase from Nocardia farcinica (strain IFM 10152).